Here is a 337-residue protein sequence, read N- to C-terminus: Monoacylglycerol lipase ABHD6 (337 aa).

Topologically, residues 1-19 are extracellular; the sequence is MDLDVVNMFVIAGGTLALP. Residues 20–42 traverse the membrane as a helical; Signal-anchor for type II membrane protein segment; it reads ILAFVASFLLWPSALIRIYYWYW. Residues 43–337 are Cytoplasmic-facing; sequence RRTLGMQVRY…HSTDNSKKLD (295 aa). One can recognise an AB hydrolase-1 domain in the interval 72–313; that stretch reads PSILMLHGFS…CGHSVVMERP (242 aa). The Nucleophile role is filled by serine 148. Active-site charge relay system residues include aspartate 278 and histidine 306.

It belongs to the AB hydrolase superfamily.

Its subcellular location is the late endosome membrane. The protein localises to the lysosome membrane. It is found in the mitochondrion membrane. It catalyses the reaction Hydrolyzes glycerol monoesters of long-chain fatty acids.. The catalysed reaction is 1-octanoylglycerol + H2O = octanoate + glycerol + H(+). The enzyme catalyses 1-decanoylglycerol + H2O = decanoate + glycerol + H(+). It carries out the reaction 1-dodecanoylglycerol + H2O = dodecanoate + glycerol + H(+). It catalyses the reaction 1-tetradecanoylglycerol + H2O = tetradecanoate + glycerol + H(+). The catalysed reaction is 2-hexadecanoylglycerol + H2O = glycerol + hexadecanoate + H(+). The enzyme catalyses 2-(9Z-octadecenoyl)-glycerol + H2O = glycerol + (9Z)-octadecenoate + H(+). It carries out the reaction 1-(9Z-octadecenoyl)-glycerol + H2O = glycerol + (9Z)-octadecenoate + H(+). It catalyses the reaction 2-(9Z,12Z-octadecadienoyl)-glycerol + H2O = (9Z,12Z)-octadecadienoate + glycerol + H(+). The catalysed reaction is 2-(5Z,8Z,11Z,14Z-eicosatetraenoyl)-glycerol + H2O = glycerol + (5Z,8Z,11Z,14Z)-eicosatetraenoate + H(+). The enzyme catalyses 1-(5Z,8Z,11Z,14Z-eicosatetraenoyl)-glycerol + H2O = glycerol + (5Z,8Z,11Z,14Z)-eicosatetraenoate + H(+). It carries out the reaction 1-(9Z,12Z-octadecadienoyl)-glycerol + H2O = (9Z,12Z)-octadecadienoate + glycerol + H(+). It catalyses the reaction 3-(9Z-octadecenoyl)-sn-glycero-1-phospho-(3'-(9Z-octadecenoyl)-1'-sn-glycerol) + H2O = 3-(9Z-octadecenoyl)-sn-glycero-1-phospho-(1'-sn-glycerol) + (9Z)-octadecenoate + H(+). The catalysed reaction is (S,S)-2-(9Z-octadecenoyl)-sn-glycero-1-phospho-(2'-(9Z-octadecenoyl)-1'-sn-glycerol) + H2O = (S,S)-2-(9Z-octadecenoyl)-sn-glycero-1-phospho-(1'-sn-glycerol) + (9Z)-octadecenoate + H(+). The enzyme catalyses (R,R)-2-(9Z-octadecenoyl)-sn-glycero-3-phospho-(2'-(9Z-octadecenoyl)-3'-sn-glycerol) + H2O = (R,R)-2-(9Z-octadecenoyl)-sn-glycero-3-phospho-(3'-sn-glycerol) + (9Z)-octadecenoate + H(+). Lipase that preferentially hydrolysis medium-chain saturated monoacylglycerols including 2-arachidonoylglycerol. Through 2-arachidonoylglycerol degradation may regulate endocannabinoid signaling pathways. Also has a lysophosphatidyl lipase activity with a preference for lysophosphatidylglycerol among other lysophospholipids. Also able to degrade bis(monoacylglycero)phosphate (BMP) and constitutes the major enzyme for BMP catabolism. BMP, also known as lysobisphosphatidic acid, is enriched in late endosomes and lysosomes and plays a key role in the formation of intraluminal vesicles and in lipid sorting. This chain is Monoacylglycerol lipase ABHD6, found in Bos taurus (Bovine).